A 390-amino-acid polypeptide reads, in one-letter code: LIM/homeobox protein Lhx4 (390 aa).

LIM zinc-binding domains lie at 28–87 (PQCA…RFGT) and 88–150 (KCTA…AKQN). The homeobox DNA-binding region spans 157–216 (AKRPRTTITAKQLETLKNAYKNSPKPARHVREQLSSETGLDMRVVQVWFQNRRAKEKRLK). Residues 161-181 (RTTITAKQLETLKNAYKNSPK) are interaction with DNA. An interaction with 5-mCpG DNA region spans residues 199–211 (RVVQVWFQNRRAK). Disordered stretches follow at residues 230–253 (SVKR…GVSD) and 356–390 (AGGP…HPPF).

The protein resides in the nucleus. Functionally, may play a critical role in the development of respiratory control mechanisms and in the normal growth and maturation of the lung. Binds preferentially to methylated DNA. The chain is LIM/homeobox protein Lhx4 (LHX4) from Homo sapiens (Human).